The following is a 182-amino-acid chain: UPF0397 protein SPT_0523 (182 aa).

Helical transmembrane passes span valine 10–threonine 30, leucine 46–isoleucine 66, tyrosine 73–phenylalanine 93, isoleucine 109–proline 129, and isoleucine 148–alanine 168.

It belongs to the UPF0397 family.

The protein localises to the cell membrane. This chain is UPF0397 protein SPT_0523, found in Streptococcus pneumoniae (strain Taiwan19F-14).